The following is a 480-amino-acid chain: Porphobilinogen deaminase, chloroplastic (480 aa).

A chloroplast-targeting transit peptide spans 1–139 (MYCGRYETIG…VSGGRIWSLA (139 aa)). Cys-395 carries the post-translational modification S-(dipyrrolylmethanemethyl)cysteine.

The protein belongs to the HMBS family. Requires dipyrromethane as cofactor.

It localises to the plastid. The protein localises to the chloroplast. The enzyme catalyses 4 porphobilinogen + H2O = hydroxymethylbilane + 4 NH4(+). It functions in the pathway porphyrin-containing compound metabolism; protoporphyrin-IX biosynthesis; coproporphyrinogen-III from 5-aminolevulinate: step 2/4. It participates in porphyrin-containing compound metabolism; chlorophyll biosynthesis. Functionally, tetrapolymerization of the monopyrrole PBG into the hydroxymethylbilane pre-uroporphyrinogen in several discrete steps. This chain is Porphobilinogen deaminase, chloroplastic, found in Euglena gracilis.